A 232-amino-acid chain; its full sequence is LexA repressor (232 aa).

Positions 26–46 (FDEMKDALDLRSKSGIHRLIT) form a DNA-binding region, H-T-H motif. Catalysis depends on for autocatalytic cleavage activity residues serine 153 and lysine 191.

Belongs to the peptidase S24 family. Homodimer.

The catalysed reaction is Hydrolysis of Ala-|-Gly bond in repressor LexA.. Represses a number of genes involved in the response to DNA damage (SOS response), including recA and lexA. In the presence of single-stranded DNA, RecA interacts with LexA causing an autocatalytic cleavage which disrupts the DNA-binding part of LexA, leading to derepression of the SOS regulon and eventually DNA repair. In Afipia carboxidovorans (strain ATCC 49405 / DSM 1227 / KCTC 32145 / OM5) (Oligotropha carboxidovorans), this protein is LexA repressor.